A 76-amino-acid chain; its full sequence is Putative membrane protein insertion efficiency factor (76 aa).

The protein belongs to the UPF0161 family.

It localises to the cell inner membrane. Its function is as follows. Could be involved in insertion of integral membrane proteins into the membrane. The polypeptide is Putative membrane protein insertion efficiency factor (Paraburkholderia phytofirmans (strain DSM 17436 / LMG 22146 / PsJN) (Burkholderia phytofirmans)).